A 212-amino-acid chain; its full sequence is Pyrrolidone-carboxylate peptidase (212 aa).

Active-site residues include Glu80, Cys143, and His165.

The protein belongs to the peptidase C15 family. Homotetramer.

It is found in the cytoplasm. The enzyme catalyses Release of an N-terminal pyroglutamyl group from a polypeptide, the second amino acid generally not being Pro.. In terms of biological role, removes 5-oxoproline from various penultimate amino acid residues except L-proline. The sequence is that of Pyrrolidone-carboxylate peptidase from Aliivibrio fischeri (strain MJ11) (Vibrio fischeri).